The following is a 327-amino-acid chain: Pectate lyase A (327 aa).

The N-terminal stretch at 1 to 19 (MQNLKFLIAAVSCLGPALA) is a signal peptide. An N-linked (GlcNAc...) asparagine glycan is attached at asparagine 99. The Ca(2+) site is built by aspartate 140, aspartate 169, and aspartate 173. The active site involves arginine 226.

Belongs to the polysaccharide lyase 1 family. It depends on Ca(2+) as a cofactor.

The protein localises to the secreted. It catalyses the reaction Eliminative cleavage of (1-&gt;4)-alpha-D-galacturonan to give oligosaccharides with 4-deoxy-alpha-D-galact-4-enuronosyl groups at their non-reducing ends.. Functionally, pectinolytic enzyme consist of four classes of enzymes: pectin lyase, polygalacturonase, pectin methylesterase and rhamnogalacturonase. Among pectinolytic enzymes, pectin lyase is the most important in depolymerization of pectin, since it cleaves internal glycosidic bonds of highly methylated pectins. Favors pectate, the anion, over pectin, the methyl ester. In Emericella nidulans (strain FGSC A4 / ATCC 38163 / CBS 112.46 / NRRL 194 / M139) (Aspergillus nidulans), this protein is Pectate lyase A (plyA).